The chain runs to 405 residues: L-carnitine CoA-transferase (405 aa).

CoA contacts are provided by Lys97 and Arg104. The active-site Nucleophile is the Asp169.

Belongs to the CoA-transferase III family. CaiB subfamily. As to quaternary structure, homodimer.

It is found in the cytoplasm. The catalysed reaction is crotonobetainyl-CoA + (R)-carnitine = crotonobetaine + (R)-carnitinyl-CoA. It carries out the reaction 4-(trimethylamino)butanoyl-CoA + (R)-carnitine = (R)-carnitinyl-CoA + 4-(trimethylamino)butanoate. Its pathway is amine and polyamine metabolism; carnitine metabolism. Catalyzes the reversible transfer of the CoA moiety from gamma-butyrobetainyl-CoA to L-carnitine to generate L-carnitinyl-CoA and gamma-butyrobetaine. Is also able to catalyze the reversible transfer of the CoA moiety from gamma-butyrobetainyl-CoA or L-carnitinyl-CoA to crotonobetaine to generate crotonobetainyl-CoA. This Escherichia coli O6:K15:H31 (strain 536 / UPEC) protein is L-carnitine CoA-transferase.